Reading from the N-terminus, the 295-residue chain is F-box only protein 6 (295 aa).

In terms of domain architecture, F-box spans 1-48; that stretch reads MVHINELPENILLELFIHIPAPQLLRNCRLVCRLWRDLIDVVSLWKRK. One can recognise an FBA domain in the interval 69 to 250; it reads FYILCSLQRN…VTNSSIIISH (182 aa). S249 and S276 each carry phosphoserine. T280 bears the Phosphothreonine mark.

As to quaternary structure, interacts with CHEK1 and CUL1. Part of a SCF (SKP1-cullin-F-box) protein ligase complex. Interacts with VCP. As to expression, present in liver and kidney (at protein level). Widely expressed.

It localises to the cytoplasm. Its pathway is protein modification; protein ubiquitination. Substrate-recognition component of some SCF (SKP1-CUL1-F-box protein)-type E3 ubiquitin ligase complexes. Involved in DNA damage response by specifically recognizing activated CHEK1 (phosphorylated on 'Ser-345'), promoting its ubiquitination and degradation. Ubiquitination of CHEK1 is required to ensure that activated CHEK1 does not accumulate as cells progress through S phase, or when replication forks encounter transient impediments during normal DNA replication. Involved in endoplasmic reticulum-associated degradation pathway (ERAD) for misfolded lumenal proteins by recognizing and binding sugar chains on unfolded glycoproteins that are retrotranslocated into the cytosol and promoting their ubiquitination and subsequent degradation. Able to recognize and bind denatured glycoproteins, which are modified with not only high-mannose but also complex-type oligosaccharides. Also recognizes sulfated glycans. This Mus musculus (Mouse) protein is F-box only protein 6 (Fbxo6).